A 491-amino-acid polypeptide reads, in one-letter code: Glutamyl-tRNA(Gln) amidotransferase subunit A (491 aa).

Active-site charge relay system residues include lysine 78 and serine 158. Residue serine 182 is the Acyl-ester intermediate of the active site.

Belongs to the amidase family. GatA subfamily. As to quaternary structure, heterotrimer of A, B and C subunits.

It catalyses the reaction L-glutamyl-tRNA(Gln) + L-glutamine + ATP + H2O = L-glutaminyl-tRNA(Gln) + L-glutamate + ADP + phosphate + H(+). In terms of biological role, allows the formation of correctly charged Gln-tRNA(Gln) through the transamidation of misacylated Glu-tRNA(Gln) in organisms which lack glutaminyl-tRNA synthetase. The reaction takes place in the presence of glutamine and ATP through an activated gamma-phospho-Glu-tRNA(Gln). This is Glutamyl-tRNA(Gln) amidotransferase subunit A from Bradyrhizobium sp. (strain ORS 278).